Consider the following 67-residue polypeptide: Conotoxin Cl6.6b (67 aa).

The signal sequence occupies residues 1 to 24; it reads MKLTCVLIAAVLLLAVCQLDSADA. Positions 25-37 are excised as a propeptide; that stretch reads TGYMRKNPSLRSP. Intrachain disulfides connect cysteine 43–cysteine 57, cysteine 50–cysteine 61, and cysteine 56–cysteine 65.

It belongs to the conotoxin O1 superfamily. As to expression, expressed by the venom duct.

It localises to the secreted. The protein is Conotoxin Cl6.6b of Californiconus californicus (California cone).